Consider the following 412-residue polypeptide: Multifunctional CCA protein (412 aa).

Residues glycine 8 and arginine 11 each coordinate ATP. 2 residues coordinate CTP: glycine 8 and arginine 11. The Mg(2+) site is built by aspartate 21 and aspartate 23. ATP is bound by residues arginine 91, arginine 137, and arginine 140. CTP-binding residues include arginine 91, arginine 137, and arginine 140. One can recognise an HD domain in the interval 228 to 329 (TGIHTLMTLS…VKLFDSIDAW (102 aa)).

The protein belongs to the tRNA nucleotidyltransferase/poly(A) polymerase family. Bacterial CCA-adding enzyme type 1 subfamily. In terms of assembly, monomer. Can also form homodimers and oligomers. Mg(2+) is required as a cofactor. Ni(2+) serves as cofactor.

It catalyses the reaction a tRNA precursor + 2 CTP + ATP = a tRNA with a 3' CCA end + 3 diphosphate. It carries out the reaction a tRNA with a 3' CCA end + 2 CTP + ATP = a tRNA with a 3' CCACCA end + 3 diphosphate. Its function is as follows. Catalyzes the addition and repair of the essential 3'-terminal CCA sequence in tRNAs without using a nucleic acid template. Adds these three nucleotides in the order of C, C, and A to the tRNA nucleotide-73, using CTP and ATP as substrates and producing inorganic pyrophosphate. tRNA 3'-terminal CCA addition is required both for tRNA processing and repair. Also involved in tRNA surveillance by mediating tandem CCA addition to generate a CCACCA at the 3' terminus of unstable tRNAs. While stable tRNAs receive only 3'-terminal CCA, unstable tRNAs are marked with CCACCA and rapidly degraded. This is Multifunctional CCA protein from Escherichia coli O8 (strain IAI1).